The primary structure comprises 291 residues: m-AAA protease-interacting protein 1, mitochondrial (291 aa).

A mitochondrion-targeting transit peptide spans 1–96 (MALAVRLLPR…TFPSCPRRTY (96 aa)).

In terms of assembly, interacts with AFG3L2. Interacts with SPG7. Interacts with SMDT1/EMRE (via the N-terminal transit peptide); interaction is direct and takes place before maturation of SMDT1/EMRE.

Its subcellular location is the mitochondrion matrix. In terms of biological role, promotes sorting of SMDT1/EMRE in mitochondria by ensuring its maturation. Interacts with the transit peptide region of SMDT1/EMRE precursor protein in the mitochondrial matrix, leading to protect it against protein degradation by YME1L1, thereby ensuring SMDT1/EMRE maturation by the mitochondrial processing peptidase (PMPCA and PMPCB). The protein is m-AAA protease-interacting protein 1, mitochondrial of Bos taurus (Bovine).